Reading from the N-terminus, the 469-residue chain is Probable Xaa-Pro aminopeptidase PEPP (469 aa).

Positions 264, 275, 398, and 438 each coordinate Mn(2+).

The protein belongs to the peptidase M24B family. Requires Mn(2+) as cofactor.

It carries out the reaction Release of any N-terminal amino acid, including proline, that is linked to proline, even from a dipeptide or tripeptide.. Functionally, catalyzes the removal of a penultimate prolyl residue from the N-termini of peptides. This Ajellomyces capsulatus (strain H143) (Darling's disease fungus) protein is Probable Xaa-Pro aminopeptidase PEPP (PEPP).